Reading from the N-terminus, the 360-residue chain is DNA replication and repair protein RecF (360 aa).

33-40 (GENGSGKT) is an ATP binding site.

This sequence belongs to the RecF family.

It localises to the cytoplasm. In terms of biological role, the RecF protein is involved in DNA metabolism; it is required for DNA replication and normal SOS inducibility. RecF binds preferentially to single-stranded, linear DNA. It also seems to bind ATP. The sequence is that of DNA replication and repair protein RecF from Rickettsia bellii (strain OSU 85-389).